We begin with the raw amino-acid sequence, 192 residues long: Ras-like GTP-binding protein Rho1 (192 aa).

G12–T19 contacts GTP. An Effector region motif is present at residues Y34–Y42. Residues D59–Q63 and N117–D120 contribute to the GTP site. The residue at position 189 (C189) is a Cysteine methyl ester. A lipid anchor (S-geranylgeranyl cysteine) is attached at C189. A propeptide spans L190–L192 (removed in mature form).

It belongs to the small GTPase superfamily. Rho family. As to quaternary structure, interacts with capu. Interacts (via REM repeats) with Pkn (via N-terminus). Interacts (via N-terminus) with wash (via N-terminus). May interact with dia/diaphanous (via CBD/FH3 domain). Expressed in hemocytes (at protein level).

The protein resides in the cell membrane. It is found in the cytoplasm. It localises to the cytoskeleton. The protein localises to the apical cell membrane. Its subcellular location is the lateral cell membrane. Functionally, has a role in regulating actin cytoskeletal organization: required during early development for proper execution of morphogenetic movements of individual cells and groups of cells important for the formation of the embryonic body plan. Plays a role in regulating dorsal closure during embryogenesis. During axis elongation, required for Rho-kinase Rok planar polarity and adherens junction localization as well as for generating a planar polarized distribution of the actin-binding protein Shrm. During embryogenesis, acts upstream of wash to regulate the developmental migration of tail hemocytes anteriorly along the ventral midline. May have a role in eye development. Involved in targeted recruitment of dia/diaphanous to apical membranes of polarized epithelial cells. In Drosophila melanogaster (Fruit fly), this protein is Ras-like GTP-binding protein Rho1.